Reading from the N-terminus, the 460-residue chain is Cobyrinate a,c-diamide synthase (460 aa).

A GATase cobBQ-type domain is found at 248-440 (KIAVARDAAF…THFHFGSSTK (193 aa)). The Nucleophile role is filled by Cys331.

It belongs to the CobB/CbiA family. Mg(2+) is required as a cofactor.

It carries out the reaction cob(II)yrinate + 2 L-glutamine + 2 ATP + 2 H2O = cob(II)yrinate a,c diamide + 2 L-glutamate + 2 ADP + 2 phosphate + 2 H(+). It functions in the pathway cofactor biosynthesis; adenosylcobalamin biosynthesis; cob(II)yrinate a,c-diamide from sirohydrochlorin (anaerobic route): step 10/10. Catalyzes the ATP-dependent amidation of the two carboxylate groups at positions a and c of cobyrinate, using either L-glutamine or ammonia as the nitrogen source. This is Cobyrinate a,c-diamide synthase from Priestia megaterium (Bacillus megaterium).